The chain runs to 673 residues: Potassium-transporting ATPase ATP-binding subunit (673 aa).

Transmembrane regions (helical) follow at residues 34-54, 65-85, 216-236, and 253-273; these read IMFVVEVGMLLALGLTIYPDL, VFSIFIILLLTLVFANFSEAL, IALFTLLMTLTIIFLVVILTM, and IALAVCLIPTTIGGLLSAIGI. Catalysis depends on aspartate 304, which acts as the 4-aspartylphosphate intermediate. Residues aspartate 341, glutamate 345, 370–377, and lysine 388 contribute to the ATP site; that span reads FTAETRMS. Mg(2+) contacts are provided by aspartate 511 and aspartate 515. A run of 3 helical transmembrane segments spans residues 581-601, 609-629, and 649-669; these read FAILPAMFMAAMPAMNHLNIM, AVLSALIFNALIIVLLIPIAM, and VYGLGGMIVPFIGIKLIDLII.

The protein belongs to the cation transport ATPase (P-type) (TC 3.A.3) family. Type IA subfamily. As to quaternary structure, the system is composed of three essential subunits: KdpA, KdpB and KdpC.

Its subcellular location is the cell membrane. It catalyses the reaction K(+)(out) + ATP + H2O = K(+)(in) + ADP + phosphate + H(+). In terms of biological role, part of the high-affinity ATP-driven potassium transport (or Kdp) system, which catalyzes the hydrolysis of ATP coupled with the electrogenic transport of potassium into the cytoplasm. This subunit is responsible for energy coupling to the transport system and for the release of the potassium ions to the cytoplasm. In Staphylococcus epidermidis (strain ATCC 35984 / DSM 28319 / BCRC 17069 / CCUG 31568 / BM 3577 / RP62A), this protein is Potassium-transporting ATPase ATP-binding subunit.